The chain runs to 372 residues: GDSL esterase/lipase At5g45910 (372 aa).

An N-terminal signal peptide occupies residues 1–19 (MRINMLFIVAFSFLVSVRS). The active-site Nucleophile is the S37. Residues N66, N101, and N137 are each glycosylated (N-linked (GlcNAc...) asparagine). Active-site residues include D345 and H348.

It belongs to the 'GDSL' lipolytic enzyme family.

The protein localises to the secreted. This chain is GDSL esterase/lipase At5g45910, found in Arabidopsis thaliana (Mouse-ear cress).